Here is a 171-residue protein sequence, read N- to C-terminus: Der GTPase-activating protein YihI (171 aa).

Disordered stretches follow at residues 1 to 99 and 145 to 171; these read MKKP…PQAE and GLSYEDDEDDEEEEKQDDMMRLLKGGN. Positions 20 to 30 are enriched in basic and acidic residues; sequence TREELNQEARD. Residues 40-59 show a composition bias toward low complexity; sequence HSAGSRANGSSASGSTAQNS. The segment covering 148 to 160 has biased composition (acidic residues); the sequence is YEDDEDDEEEEKQ.

This sequence belongs to the YihI family. In terms of assembly, interacts with Der.

In terms of biological role, a GTPase-activating protein (GAP) that modifies Der/EngA GTPase function. May play a role in ribosome biogenesis. This Enterobacter sp. (strain 638) protein is Der GTPase-activating protein YihI.